The sequence spans 120 residues: Large ribosomal subunit protein uL18 (120 aa).

Residues 1–10 (MKRTRTESVQ) are compositionally biased toward basic and acidic residues. The segment at 1–24 (MKRTRTESVQRRHSRIRRKVEGTP) is disordered.

Belongs to the universal ribosomal protein uL18 family. Part of the 50S ribosomal subunit; part of the 5S rRNA/L5/L18/L25 subcomplex. Contacts the 5S and 23S rRNAs.

This is one of the proteins that bind and probably mediate the attachment of the 5S RNA into the large ribosomal subunit, where it forms part of the central protuberance. In Gloeothece citriformis (strain PCC 7424) (Cyanothece sp. (strain PCC 7424)), this protein is Large ribosomal subunit protein uL18.